We begin with the raw amino-acid sequence, 355 residues long: Probable butyrate kinase (355 aa).

This sequence belongs to the acetokinase family.

The protein resides in the cytoplasm. It catalyses the reaction butanoate + ATP = butanoyl phosphate + ADP. This Listeria monocytogenes serotype 4a (strain HCC23) protein is Probable butyrate kinase.